The primary structure comprises 290 residues: MCSITSILGLIGRNVNYSYSPFIHNTAAEMLRLPFYYTIFNIADARQIPDALNGMRALGIAGLNVTIPYKQVVTEYVDTLSAEAQAVGAVNTIVNNNGRLSGCNTDIAGVSHPLKPYKERLHQSPAGIFGNGGAALAAVEALRRDYHPSAIRLFVRDPDKGLALAEQVHAKHPEAPIEIFKIDAYDAIRDCHLLINATPIGTKGVQTAGNSALLPQEQKLLHDGQIIFDMVYNPLRTPFVNMAAEAGAVVIPGVEMLIAQAAESFCLWTGETMPVDSIREKILKKLTAQP.

Residues 18–20 and Thr-66 each bind shikimate; that span reads SYS. Lys-70 serves as the catalytic Proton acceptor. Residues Asn-91 and Asp-106 each contribute to the shikimate site. NADP(+)-binding positions include 130 to 134 and Met-230; that span reads GNGGA. Residue Tyr-232 participates in shikimate binding. An NADP(+)-binding site is contributed by Gly-253.

Belongs to the shikimate dehydrogenase family. In terms of assembly, homodimer.

It catalyses the reaction shikimate + NADP(+) = 3-dehydroshikimate + NADPH + H(+). It functions in the pathway metabolic intermediate biosynthesis; chorismate biosynthesis; chorismate from D-erythrose 4-phosphate and phosphoenolpyruvate: step 4/7. Its function is as follows. Involved in the biosynthesis of the chorismate, which leads to the biosynthesis of aromatic amino acids. Catalyzes the reversible NADPH linked reduction of 3-dehydroshikimate (DHSA) to yield shikimate (SA). This is Shikimate dehydrogenase (NADP(+)) from Prosthecochloris aestuarii (strain DSM 271 / SK 413).